We begin with the raw amino-acid sequence, 222 residues long: Orotidine 5'-phosphate decarboxylase (222 aa).

Residues D11, K30, 59 to 68 (DFKLADIGYI), S115, 164 to 174 (PGMGSQGGSYG), G187, and R188 contribute to the substrate site. K61 functions as the Proton donor in the catalytic mechanism.

The protein belongs to the OMP decarboxylase family. Type 1 subfamily. In terms of assembly, homodimer.

It catalyses the reaction orotidine 5'-phosphate + H(+) = UMP + CO2. Its pathway is pyrimidine metabolism; UMP biosynthesis via de novo pathway; UMP from orotate: step 2/2. Its function is as follows. Catalyzes the decarboxylation of orotidine 5'-monophosphate (OMP) to uridine 5'-monophosphate (UMP). This is Orotidine 5'-phosphate decarboxylase from Saccharolobus solfataricus (strain ATCC 35092 / DSM 1617 / JCM 11322 / P2) (Sulfolobus solfataricus).